We begin with the raw amino-acid sequence, 305 residues long: Probable lipid kinase YegS-like (305 aa).

Positions 2–134 (HPPAPALLII…DLAKVNDQRY (133 aa)) constitute a DAGKc domain. ATP-binding positions include Thr-40, 66–72 (GDGTINE), and Thr-95. 3 residues coordinate Mg(2+): Leu-215, Asp-218, and Leu-220. The active-site Proton acceptor is the Glu-271.

Belongs to the diacylglycerol/lipid kinase family. YegS lipid kinase subfamily. Requires Mg(2+) as cofactor. Ca(2+) is required as a cofactor.

Its subcellular location is the cytoplasm. Functionally, probably phosphorylates lipids; the in vivo substrate is unknown. The polypeptide is Probable lipid kinase YegS-like (Serratia proteamaculans (strain 568)).